Here is a 154-residue protein sequence, read N- to C-terminus: MSILTDFKNFISKGNVLGLGIAVIMGDAFNKIISSVTGDLLMPIIGAVFGGVDFSGFFIRLGAVPAGYTGSLTSYNDLKKAGVPLFGYGQFLTVVVNFVIVAFILFMIMKLAAKLQKELDKTEAKKEEKIAEAAPTPEDIVLLREIRDELRGKK.

The next 3 membrane-spanning stretches (helical) occupy residues 16–36 (VLGLGIAVIMGDAFNKIISSV), 39–59 (DLLMPIIGAVFGGVDFSGFFI), and 89–109 (GQFLTVVVNFVIVAFILFMIM).

It belongs to the MscL family. Homopentamer.

It localises to the cell inner membrane. Channel that opens in response to stretch forces in the membrane lipid bilayer. May participate in the regulation of osmotic pressure changes within the cell. The polypeptide is Large-conductance mechanosensitive channel (Zymomonas mobilis subsp. mobilis (strain ATCC 31821 / ZM4 / CP4)).